A 302-amino-acid chain; its full sequence is N-acetylmuramic acid 6-phosphate etherase (302 aa).

Residues 55–218 enclose the SIS domain; it reads AYPKFDQGGR…STGIMVKSGK (164 aa). Residue Glu83 is the Proton donor of the active site. Residue Glu114 is part of the active site.

The protein belongs to the GCKR-like family. MurNAc-6-P etherase subfamily. In terms of assembly, homodimer.

The enzyme catalyses N-acetyl-D-muramate 6-phosphate + H2O = N-acetyl-D-glucosamine 6-phosphate + (R)-lactate. It functions in the pathway amino-sugar metabolism; N-acetylmuramate degradation. In terms of biological role, specifically catalyzes the cleavage of the D-lactyl ether substituent of MurNAc 6-phosphate, producing GlcNAc 6-phosphate and D-lactate. This Levilactobacillus brevis (strain ATCC 367 / BCRC 12310 / CIP 105137 / JCM 1170 / LMG 11437 / NCIMB 947 / NCTC 947) (Lactobacillus brevis) protein is N-acetylmuramic acid 6-phosphate etherase.